Here is a 577-residue protein sequence, read N- to C-terminus: Arginine--tRNA ligase (577 aa).

The 'HIGH' region signature appears at 122–132; sequence PNVAKEMHVGH.

It belongs to the class-I aminoacyl-tRNA synthetase family. As to quaternary structure, monomer.

It is found in the cytoplasm. It carries out the reaction tRNA(Arg) + L-arginine + ATP = L-arginyl-tRNA(Arg) + AMP + diphosphate. The polypeptide is Arginine--tRNA ligase (Escherichia coli O157:H7 (strain EC4115 / EHEC)).